A 674-amino-acid polypeptide reads, in one-letter code: Early transcription factor 70 kDa subunit (674 aa).

Positions 34 to 193 constitute a Helicase ATP-binding domain; it reads ERSLKEKKSV…KDIVELLTNE (160 aa). ATP is bound at residue 45–52; it reads LFHKMGSG. The DEXH box motif lies at 135-138; it reads YDNY.

Belongs to the helicase family. VETF subfamily. In terms of assembly, heterodimer of a 70 kDa and a 82 kDa subunit. Part of the early transcription complex composed of ETF, RAP94, and the DNA-directed RNA polymerase.

The protein resides in the virion. Functionally, acts with RNA polymerase to initiate transcription from early gene promoters. Is recruited by the RPO-associated protein of 94 kDa (RAP94) to form the early transcription complex, which also contains the core RNA polymerase. ETF heterodimer binds to early gene promoters. This Melanoplus sanguinipes entomopoxvirus (MsEPV) protein is Early transcription factor 70 kDa subunit (VETFS).